The following is a 670-amino-acid chain: DNA ligase (670 aa).

Residues 32-36, 81-82, and glutamate 113 contribute to the NAD(+) site; these read DAEYD and SL. Lysine 115 serves as the catalytic N6-AMP-lysine intermediate. Residues arginine 136, glutamate 173, lysine 290, and lysine 314 each coordinate NAD(+). Residues cysteine 406, cysteine 409, cysteine 424, and cysteine 430 each coordinate Zn(2+). Positions 592–670 constitute a BRCT domain; it reads EIDSPFAGKT…EQEMMRLLGE (79 aa).

Belongs to the NAD-dependent DNA ligase family. LigA subfamily. Requires Mg(2+) as cofactor. The cofactor is Mn(2+).

It carries out the reaction NAD(+) + (deoxyribonucleotide)n-3'-hydroxyl + 5'-phospho-(deoxyribonucleotide)m = (deoxyribonucleotide)n+m + AMP + beta-nicotinamide D-nucleotide.. Functionally, DNA ligase that catalyzes the formation of phosphodiester linkages between 5'-phosphoryl and 3'-hydroxyl groups in double-stranded DNA using NAD as a coenzyme and as the energy source for the reaction. It is essential for DNA replication and repair of damaged DNA. This chain is DNA ligase, found in Erwinia tasmaniensis (strain DSM 17950 / CFBP 7177 / CIP 109463 / NCPPB 4357 / Et1/99).